The chain runs to 291 residues: DegV domain-containing protein CPE0026 (291 aa).

The DegV domain maps to 4–286 (FVIFTDSAAD…IGTLAVFFLG (283 aa)). Residues T63 and S95 each coordinate hexadecanoate.

May bind long-chain fatty acids, such as palmitate, and may play a role in lipid transport or fatty acid metabolism. This chain is DegV domain-containing protein CPE0026, found in Clostridium perfringens (strain 13 / Type A).